The chain runs to 158 residues: Cytochrome c-type biogenesis protein CcmE (158 aa).

Over 1–8 (MMRHRNRR) the chain is Cytoplasmic. Residues 9–29 (LATIAASAIVLVVAVGLGLMA) form a helical; Signal-anchor for type II membrane protein membrane-spanning segment. The Periplasmic segment spans residues 30–158 (LRSAVVFFYS…PSAAGDGDSR (129 aa)). 2 residues coordinate heme: H123 and Y127. The interval 139–158 (AGVWQGEGETPSAAGDGDSR) is disordered.

This sequence belongs to the CcmE/CycJ family.

It localises to the cell inner membrane. In terms of biological role, heme chaperone required for the biogenesis of c-type cytochromes. Transiently binds heme delivered by CcmC and transfers the heme to apo-cytochromes in a process facilitated by CcmF and CcmH. In Maricaulis maris (strain MCS10) (Caulobacter maris), this protein is Cytochrome c-type biogenesis protein CcmE.